We begin with the raw amino-acid sequence, 842 residues long: Molybdenum cofactor sulfurase (842 aa).

The residue at position 236 (lysine 236) is an N6-(pyridoxal phosphate)lysine. Cysteine 402 is a catalytic residue. Residues 637-680 form a disordered region; it reads PGSQHGDAQRSSKARLQKHQITTDQESDVQEVHPGSGTTTDSTW. Residues 663–831 form the MOSC domain; that stretch reads SDVQEVHPGS…AARGDVAYPT (169 aa).

This sequence belongs to the class-V pyridoxal-phosphate-dependent aminotransferase family. MOCOS subfamily. Requires pyridoxal 5'-phosphate as cofactor.

It catalyses the reaction Mo-molybdopterin + L-cysteine + AH2 = thio-Mo-molybdopterin + L-alanine + A + H2O. It functions in the pathway cofactor biosynthesis; molybdopterin biosynthesis. Sulfurates the molybdenum cofactor. Sulfation of molybdenum is essential for xanthine dehydrogenase (XDH) and aldehyde oxidase (ADO) enzymes in which molybdenum cofactor is liganded by 1 oxygen and 1 sulfur atom in active form. The polypeptide is Molybdenum cofactor sulfurase (Pyricularia oryzae (strain 70-15 / ATCC MYA-4617 / FGSC 8958) (Rice blast fungus)).